A 138-amino-acid chain; its full sequence is Transcription antitermination protein NusB (138 aa).

It belongs to the NusB family.

In terms of biological role, involved in transcription antitermination. Required for transcription of ribosomal RNA (rRNA) genes. Binds specifically to the boxA antiterminator sequence of the ribosomal RNA (rrn) operons. The polypeptide is Transcription antitermination protein NusB (Helicobacter pylori (strain G27)).